Consider the following 109-residue polypeptide: Tetraspanin-31 (109 aa).

Residues 1-12 (MVCGGFACSKNA) are Cytoplasmic-facing. The chain crosses the membrane as a helical span at residues 13–33 (LCALNVVYMLVGLLLIGVAAW). At 34–44 (AKGLGLVSSIH) the chain is on the extracellular side. Residues 45-65 (IIGGVIAVGVFLLLIAVAGLV) form a helical membrane-spanning segment. The Cytoplasmic segment spans residues 66–72 (GAVNHHQ). The helical transmembrane segment at 73–93 (VLLFFYMIILGLVFIFQFGIS) threads the bilayer. Residues 94–109 (CSCLAINLSKQAGIIN) lie on the Extracellular side of the membrane. Asn-100 carries an N-linked (GlcNAc...) asparagine glycan.

It belongs to the tetraspanin (TM4SF) family.

It localises to the membrane. This is Tetraspanin-31 (TSPAN31) from Sus scrofa (Pig).